Here is a 185-residue protein sequence, read N- to C-terminus: Ribosome-recycling factor (185 aa).

The protein belongs to the RRF family.

It localises to the cytoplasm. Functionally, responsible for the release of ribosomes from messenger RNA at the termination of protein biosynthesis. May increase the efficiency of translation by recycling ribosomes from one round of translation to another. In Frankia alni (strain DSM 45986 / CECT 9034 / ACN14a), this protein is Ribosome-recycling factor.